The chain runs to 702 residues: Epsin-1 (702 aa).

In terms of domain architecture, ENTH spans 10 to 142 (NFSKGYTDTQ…EDEHALKEAR (133 aa)). 2 stretches are compositionally biased toward basic and acidic residues: residues 136-160 (HALK…SSRF) and 183-192 (SRYDDDDRDH). Residues 136 to 285 (HALKEARGDS…HQREREQQEQ (150 aa)) form a disordered region. Basic residues predominate over residues 193-214 (RSRRRSRSRRPGRSRSRRRSRR). Phosphoserine is present on residues Ser-212, Ser-216, Ser-218, and Ser-223. UIM domains follow at residues 226–245 (ENDP…AEED) and 254–273 (DSEA…DEAR). Basic and acidic residues predominate over residues 230 to 248 (ELQRVIEESKRQAEEDAKR). Ser-255 carries the phosphoserine modification. The span at 266–283 (SKEEDEARQRHQREREQQ) shows a compositional bias: basic and acidic residues. Thr-406 is modified (phosphothreonine). Disordered stretches follow at residues 504-589 (NHTG…RTGD) and 683-702 (PMQG…LIDL). Residues 514–534 (TGLQRQTTGYTGNNNPYSRPL) are compositionally biased toward polar residues. Residues 535-549 (QSQSTGILQQQQQQS) show a composition bias toward low complexity. Residues 557–577 (KTGSNNPFAQFSNLPSQSTAP) are compositionally biased toward polar residues. A compositionally biased stretch (low complexity) spans 683 to 695 (PMQGMQQQSMQPQ).

The protein belongs to the epsin family.

Its subcellular location is the cytoplasm. The protein localises to the membrane. Binds to membranes enriched in phosphatidylinositol 3,5-bisphosphate (PtdIns(3,5)P2) and phosphatidylinositol 4,5-bisphosphate (PtdIns(4,5)P2). Required for endocytosis and localization of actin. The polypeptide is Epsin-1 (ent1) (Schizosaccharomyces pombe (strain 972 / ATCC 24843) (Fission yeast)).